We begin with the raw amino-acid sequence, 154 residues long: UPF0225 protein SG1365 (154 aa).

The protein belongs to the UPF0225 family.

The protein is UPF0225 protein SG1365 of Sodalis glossinidius (strain morsitans).